Consider the following 104-residue polypeptide: U20-lycotoxin-Ls1a (104 aa).

The N-terminal stretch at 1–30 is a signal peptide; that stretch reads MFSTSDQVSKMNSRILSALLILGIATCVIA. The WAP domain occupies 31–76; that stretch reads GGFCPKSRHPQCNLSYKINDCCAQSDCRVGSVCCVEGCGNVCRAES. 5 cysteine pairs are disulfide-bonded: C34/C64, C42/C68, C51/C63, C52/C90, and C57/C72.

This sequence belongs to the venom protein 11 family. 02 (wap-2) subfamily. In terms of processing, contains 5 disulfide bonds. Expressed by the venom gland.

It is found in the secreted. Its function is as follows. Has antibacterial activity. The chain is U20-lycotoxin-Ls1a from Lycosa singoriensis (Wolf spider).